Here is a 383-residue protein sequence, read N- to C-terminus: Dual-specificity RNA methyltransferase RlmN (383 aa).

Residue E95 is the Proton acceptor of the active site. The region spanning 101–349 (EETRGTLCVS…TTVRKTRGDD (249 aa)) is the Radical SAM core domain. An intrachain disulfide couples C108 to C354. [4Fe-4S] cluster is bound by residues C115, C119, and C122. Residues 180-181 (GE), S212, 234-236 (SLH), and N311 contribute to the S-adenosyl-L-methionine site. C354 acts as the S-methylcysteine intermediate in catalysis.

This sequence belongs to the radical SAM superfamily. RlmN family. Requires [4Fe-4S] cluster as cofactor.

It is found in the cytoplasm. It catalyses the reaction adenosine(2503) in 23S rRNA + 2 reduced [2Fe-2S]-[ferredoxin] + 2 S-adenosyl-L-methionine = 2-methyladenosine(2503) in 23S rRNA + 5'-deoxyadenosine + L-methionine + 2 oxidized [2Fe-2S]-[ferredoxin] + S-adenosyl-L-homocysteine. The enzyme catalyses adenosine(37) in tRNA + 2 reduced [2Fe-2S]-[ferredoxin] + 2 S-adenosyl-L-methionine = 2-methyladenosine(37) in tRNA + 5'-deoxyadenosine + L-methionine + 2 oxidized [2Fe-2S]-[ferredoxin] + S-adenosyl-L-homocysteine. Functionally, specifically methylates position 2 of adenine 2503 in 23S rRNA and position 2 of adenine 37 in tRNAs. m2A2503 modification seems to play a crucial role in the proofreading step occurring at the peptidyl transferase center and thus would serve to optimize ribosomal fidelity. This Paraburkholderia xenovorans (strain LB400) protein is Dual-specificity RNA methyltransferase RlmN.